The chain runs to 330 residues: Putative protein N-methyltransferase FAM86B2 (330 aa).

Methionine 1 carries the post-translational modification N-acetylmethionine. Residues tryptophan 139, glycine 165–glycine 167, tryptophan 228, and alanine 247 each bind S-adenosyl-L-methionine.

The protein belongs to the class I-like SAM-binding methyltransferase superfamily. EEF2KMT family. As to quaternary structure, interacts with EEF2KMT.

This chain is Putative protein N-methyltransferase FAM86B2 (FAM86B2), found in Homo sapiens (Human).